Reading from the N-terminus, the 403-residue chain is S-adenosylmethionine synthase (403 aa).

Residue His17 participates in ATP binding. A Mg(2+)-binding site is contributed by Asp19. Glu45 lines the K(+) pocket. Positions 58 and 104 each coordinate L-methionine. The tract at residues 104 to 114 is flexible loop; it reads QSPDIAQGVDT. Residues 179–181, 250–251, Asp259, 265–266, Ala282, and Lys286 contribute to the ATP site; these read DGK, KF, and RK. Asp259 serves as a coordination point for L-methionine. Position 290 (Lys290) interacts with L-methionine.

Belongs to the AdoMet synthase family. Homotetramer; dimer of dimers. Mg(2+) serves as cofactor. It depends on K(+) as a cofactor.

It is found in the cytoplasm. It carries out the reaction L-methionine + ATP + H2O = S-adenosyl-L-methionine + phosphate + diphosphate. The protein operates within amino-acid biosynthesis; S-adenosyl-L-methionine biosynthesis; S-adenosyl-L-methionine from L-methionine: step 1/1. In terms of biological role, catalyzes the formation of S-adenosylmethionine (AdoMet) from methionine and ATP. The overall synthetic reaction is composed of two sequential steps, AdoMet formation and the subsequent tripolyphosphate hydrolysis which occurs prior to release of AdoMet from the enzyme. This Mycobacterium marinum (strain ATCC BAA-535 / M) protein is S-adenosylmethionine synthase.